We begin with the raw amino-acid sequence, 490 residues long: Bifunctional dihydrocamalexate synthase/camalexin synthase (490 aa).

A helical membrane pass occupies residues 1-21; sequence MSVFLCFLVLLPLILIFLNVL.

This sequence belongs to the cytochrome P450 family.

The protein resides in the membrane. The catalysed reaction is 2-(L-cystein-S-yl)-2-(1H-indol-3-yl)-acetonitrile + 2 reduced [NADPH--hemoprotein reductase] + 2 O2 = camalexin + hydrogen cyanide + 2 oxidized [NADPH--hemoprotein reductase] + CO2 + 4 H2O + 2 H(+). It catalyses the reaction 2-(L-cystein-S-yl)-2-(1H-indol-3-yl)-acetonitrile + reduced [NADPH--hemoprotein reductase] + O2 = (R)-dihydrocamalexate + hydrogen cyanide + oxidized [NADPH--hemoprotein reductase] + 2 H2O + 2 H(+). The enzyme catalyses (R)-dihydrocamalexate + reduced [NADPH--hemoprotein reductase] + O2 = camalexin + oxidized [NADPH--hemoprotein reductase] + CO2 + 2 H2O. Multifunctional enzyme involved in the biosynthesis of the indole-derived phytoalexin camalexin. Catalyzes two reactions, the formation of dihydrocamalexate from indole-3-acetonitrile-cysteine conjugate and the oxidative decarboxylation of dihydrocamalexate which is the final step in camalexin biosynthesis. Required for the resistance to the fungal pathogens A.brassicicola, B.cinerea, B.elliptica, B.tulipae, L.maculans and Colletotrichum higginsianum. Seems not to be required for resistance to P.syringae, P.porri, and not involved in age-related resistance. This is Bifunctional dihydrocamalexate synthase/camalexin synthase (CYP71B15) from Arabidopsis thaliana (Mouse-ear cress).